The chain runs to 508 residues: Histidine ammonia-lyase (508 aa).

Positions alanine 139–glycine 141 form a cross-link, 5-imidazolinone (Ala-Gly). Serine 140 bears the 2,3-didehydroalanine (Ser) mark.

Belongs to the PAL/histidase family. Post-translationally, contains an active site 4-methylidene-imidazol-5-one (MIO), which is formed autocatalytically by cyclization and dehydration of residues Ala-Ser-Gly.

It is found in the cytoplasm. It catalyses the reaction L-histidine = trans-urocanate + NH4(+). Its pathway is amino-acid degradation; L-histidine degradation into L-glutamate; N-formimidoyl-L-glutamate from L-histidine: step 1/3. This Acidiphilium cryptum (strain JF-5) protein is Histidine ammonia-lyase.